We begin with the raw amino-acid sequence, 193 residues long: Peptidyl-tRNA hydrolase (193 aa).

Tyrosine 14 contacts tRNA. The active-site Proton acceptor is the histidine 19. Positions 64, 66, and 112 each coordinate tRNA.

The protein belongs to the PTH family. Monomer.

The protein resides in the cytoplasm. The enzyme catalyses an N-acyl-L-alpha-aminoacyl-tRNA + H2O = an N-acyl-L-amino acid + a tRNA + H(+). In terms of biological role, hydrolyzes ribosome-free peptidyl-tRNAs (with 1 or more amino acids incorporated), which drop off the ribosome during protein synthesis, or as a result of ribosome stalling. Its function is as follows. Catalyzes the release of premature peptidyl moieties from peptidyl-tRNA molecules trapped in stalled 50S ribosomal subunits, and thus maintains levels of free tRNAs and 50S ribosomes. The chain is Peptidyl-tRNA hydrolase from Bartonella bacilliformis (strain ATCC 35685 / KC583 / Herrer 020/F12,63).